A 478-amino-acid chain; its full sequence is G2/mitotic-specific cyclin-B (478 aa).

The disordered stretch occupies residues 1–153; the sequence is MNENDENGPS…KTIQQEEPPR (153 aa). Positions 16–31 are enriched in low complexity; the sequence is AKAAALTTDAPAANGA. The span at 65–74 shows a compositional bias: basic and acidic residues; the sequence is DNGETKDAKK. Over residues 77 to 102 the composition is skewed to polar residues; that stretch reads SKTGLTSKATMQSGGVQKLSRSNLSR. Positions 110 to 121 are enriched in basic and acidic residues; that stretch reads NNVKKPATEAKR. The span at 133 to 145 shows a compositional bias: polar residues; it reads KRTSSQKSLQEKT.

It belongs to the cyclin family. Cyclin AB subfamily.

Essential for the control of the cell cycle at the G2/M (mitosis) transition. Interacts with the CDC2 protein kinase to form MPF. G2/M cyclins accumulate steadily during G2 and are abruptly destroyed at mitosis. The chain is G2/mitotic-specific cyclin-B (nimE) from Emericella nidulans (strain FGSC A4 / ATCC 38163 / CBS 112.46 / NRRL 194 / M139) (Aspergillus nidulans).